A 257-amino-acid polypeptide reads, in one-letter code: UPF0246 protein Mmc1_3117 (257 aa).

It belongs to the UPF0246 family.

The polypeptide is UPF0246 protein Mmc1_3117 (Magnetococcus marinus (strain ATCC BAA-1437 / JCM 17883 / MC-1)).